The following is a 43-amino-acid chain: uncharacterized protein (43 aa).

This is an uncharacterized protein from Bacillus subtilis (strain 168).